Consider the following 202-residue polypeptide: Matrix protein (202 aa).

Positions 35–38 (PPEY) match the PPXY motif motif. Residues 115 to 151 (KLRRTLIFQWAESHGPLEGEELEYSQEITWDDEAEFV) form an essential for glycoprotein binding region.

It belongs to the lyssavirus matrix protein family. Homomultimer. Interacts with nucleoprotein and with the cytoplasmic domain of glycoprotein.

The protein resides in the virion membrane. The protein localises to the host endomembrane system. Plays a major role in assembly and budding of virion. Completely covers the ribonucleoprotein coil and keep it in condensed bullet-shaped form. Inhibits viral transcription and stimulates replication. Plays a major role in early induction of TRAIL-mediated apoptosis in infected neurons. The sequence is that of Matrix protein (M) from Mokola virus (MOKV).